The chain runs to 292 residues: Small ribosomal subunit biogenesis GTPase RsgA (292 aa).

Residues 62 to 213 (KNSLVRPPIV…IADTPGFSSL (152 aa)) enclose the CP-type G domain. Residues 111–114 (SKMD) and 156–164 (GQTGVGKST) each bind GTP. Residues Cys237, Cys242, His244, and Cys250 each coordinate Zn(2+).

This sequence belongs to the TRAFAC class YlqF/YawG GTPase family. RsgA subfamily. Monomer. Associates with 30S ribosomal subunit, binds 16S rRNA. Zn(2+) serves as cofactor.

The protein resides in the cytoplasm. Functionally, one of several proteins that assist in the late maturation steps of the functional core of the 30S ribosomal subunit. Helps release RbfA from mature subunits. May play a role in the assembly of ribosomal proteins into the subunit. Circularly permuted GTPase that catalyzes slow GTP hydrolysis, GTPase activity is stimulated by the 30S ribosomal subunit. The polypeptide is Small ribosomal subunit biogenesis GTPase RsgA (Streptococcus pneumoniae serotype 4 (strain ATCC BAA-334 / TIGR4)).